The sequence spans 724 residues: Putative methyltransferase NSUN7 (724 aa).

Cys-444 acts as the Nucleophile in catalysis. 3 disordered regions span residues 542 to 574 (KTLK…LAVD), 595 to 629 (ISTS…TPLV), and 698 to 724 (TSST…RPWL). Residues 543–554 (TLKRDKKRKKSK) are compositionally biased toward basic residues. The segment covering 562-572 (HHGDPLRDHLA) has biased composition (basic and acidic residues). Positions 595–618 (ISTSTKMSAPAKTVSQAGTSSQVR) are enriched in polar residues.

The protein belongs to the class I-like SAM-binding methyltransferase superfamily. RsmB/NOP family. Expressed in testis.

May have S-adenosyl-L-methionine-dependent methyl-transferase activity. This Mus musculus (Mouse) protein is Putative methyltransferase NSUN7 (Nsun7).